Consider the following 330-residue polypeptide: Glycerol-3-phosphate dehydrogenase [NAD(P)+] (330 aa).

NADPH is bound by residues Trp-11, Arg-31, His-32, and Lys-105. Residues Lys-105 and Gly-133 each contribute to the sn-glycerol 3-phosphate site. Ala-137 serves as a coordination point for NADPH. Sn-glycerol 3-phosphate is bound by residues Lys-188, Asp-241, Ser-251, Arg-252, and Asn-253. Catalysis depends on Lys-188, which acts as the Proton acceptor. NADPH is bound at residue Arg-252. Leu-277 and Glu-279 together coordinate NADPH.

Belongs to the NAD-dependent glycerol-3-phosphate dehydrogenase family.

The protein localises to the cytoplasm. The enzyme catalyses sn-glycerol 3-phosphate + NAD(+) = dihydroxyacetone phosphate + NADH + H(+). It catalyses the reaction sn-glycerol 3-phosphate + NADP(+) = dihydroxyacetone phosphate + NADPH + H(+). It participates in membrane lipid metabolism; glycerophospholipid metabolism. Functionally, catalyzes the reduction of the glycolytic intermediate dihydroxyacetone phosphate (DHAP) to sn-glycerol 3-phosphate (G3P), the key precursor for phospholipid synthesis. In Orientia tsutsugamushi (strain Boryong) (Rickettsia tsutsugamushi), this protein is Glycerol-3-phosphate dehydrogenase [NAD(P)+].